Here is a 144-residue protein sequence, read N- to C-terminus: Small ribosomal subunit protein uS11 (144 aa).

Residues 123–144 (EDVTPVPTDSTRRKGSRRGRRL) are disordered. The span at 135 to 144 (RKGSRRGRRL) shows a compositional bias: basic residues.

The protein belongs to the universal ribosomal protein uS11 family.

This is Small ribosomal subunit protein uS11 (RPS14) from Trypanosoma brucei brucei.